The following is a 213-amino-acid chain: Octanoyltransferase (213 aa).

Residues 32–207 (DSTLDEIWLV…NILALLNNPD (176 aa)) enclose the BPL/LPL catalytic domain. Substrate contacts are provided by residues 71-78 (RGGQVTYH), 138-140 (SLG), and 151-153 (GLA). The active-site Acyl-thioester intermediate is Cys169.

The protein belongs to the LipB family.

The protein resides in the cytoplasm. It carries out the reaction octanoyl-[ACP] + L-lysyl-[protein] = N(6)-octanoyl-L-lysyl-[protein] + holo-[ACP] + H(+). The protein operates within protein modification; protein lipoylation via endogenous pathway; protein N(6)-(lipoyl)lysine from octanoyl-[acyl-carrier-protein]: step 1/2. Functionally, catalyzes the transfer of endogenously produced octanoic acid from octanoyl-acyl-carrier-protein onto the lipoyl domains of lipoate-dependent enzymes. Lipoyl-ACP can also act as a substrate although octanoyl-ACP is likely to be the physiological substrate. This is Octanoyltransferase from Escherichia coli O8 (strain IAI1).